The following is a 219-amino-acid chain: Ribonuclease HII (219 aa).

The RNase H type-2 domain occupies 30–219; sequence RVIAGIDEAG…VREHVTCPSS (190 aa). The a divalent metal cation site is built by Asp36, Glu37, and Asp128.

It belongs to the RNase HII family. Mn(2+) is required as a cofactor. The cofactor is Mg(2+).

The protein localises to the cytoplasm. The enzyme catalyses Endonucleolytic cleavage to 5'-phosphomonoester.. Endonuclease that specifically degrades the RNA of RNA-DNA hybrids. This is Ribonuclease HII from Pelobacter propionicus (strain DSM 2379 / NBRC 103807 / OttBd1).